The primary structure comprises 595 residues: Fructan 1-exohydrolase (595 aa).

A signal peptide spans 1-20; sequence MAQAWAFLLPLLVLGSYVTS. The active site involves D74. N-linked (GlcNAc...) asparagine glycosylation is found at N167, N235, and N247. Residues C445 and C491 are joined by a disulfide bond. N-linked (GlcNAc...) asparagine glycosylation occurs at N566.

This sequence belongs to the glycosyl hydrolase 32 family.

The catalysed reaction is Hydrolysis of terminal, non-reducing (2-&gt;1)-linked beta-D-fructofuranose residues in fructans.. With respect to regulation, inhibited by sucrose. Hydrolyzes inulin-type beta-(2,1)-fructans. May play a role as a beta-(2,1)-trimmer during graminan biosynthesis. This Aegilops speltoides (Goatgrass) protein is Fructan 1-exohydrolase.